Consider the following 317-residue polypeptide: Apolipoprotein E (317 aa).

The N-terminal stretch at 1-18 (MKVLWAALLVTFLAGCQA) is a signal peptide. Repeat copies occupy residues 80-101 (ALMD…EQLT), 102-123 (PVAE…ARLG), 124-145 (ADME…AMLG), 146-167 (QSTE…KRLL), 168-189 (RDAD…EGAE), 190-211 (RGVS…VRAA), 212-233 (TVGS…ERLR), and 234-255 (ARME…EQVA). The interval 80–255 (ALMDETMKEL…RLDEVKEQVA (176 aa)) is 8 X 22 AA approximate tandem repeats. The residue at position 143 (Met-143) is a Methionine sulfoxide. At Ser-147 the chain carries Phosphoserine. An LDL and other lipoprotein receptors binding region spans residues 158–168 (HLRKLRKRLLR). Residue 162–165 (LRKR) coordinates heparin. The interval 210–290 (AATVGSLAGQ…SWFEPLVEDM (81 aa)) is lipid-binding and lipoprotein association. Position 229–236 (229–236 (GERLRARM)) interacts with heparin. Positions 266–317 (QQIRLQAEAFQARLKSWFEPLVEDMQRQWAGLVEKVQAAVGTSAAPVPSDNH) are homooligomerization. Residues 278–290 (RLKSWFEPLVEDM) are specificity for association with VLDL.

The protein belongs to the apolipoprotein A1/A4/E family. Homotetramer. May interact with ABCA1; functionally associated with ABCA1 in the biogenesis of HDLs. May interact with APP/A4 amyloid-beta peptide; the interaction is extremely stable in vitro but its physiological significance is unclear. May interact with MAPT. May interact with MAP2. In the cerebrospinal fluid, interacts with secreted SORL1. Interacts with PMEL; this allows the loading of PMEL luminal fragment on ILVs to induce fibril nucleation. APOE exists as multiple glycosylated and sialylated glycoforms within cells and in plasma. The extent of glycosylation and sialylation are tissue and context specific. In terms of processing, glycated in plasma VLDL. Post-translationally, phosphorylated by FAM20C in the extracellular medium.

It is found in the secreted. The protein localises to the extracellular space. It localises to the extracellular matrix. The protein resides in the extracellular vesicle. Its subcellular location is the endosome. It is found in the multivesicular body. In terms of biological role, APOE is an apolipoprotein, a protein associating with lipid particles, that mainly functions in lipoprotein-mediated lipid transport between organs via the plasma and interstitial fluids. APOE is a core component of plasma lipoproteins and is involved in their production, conversion and clearance. Apolipoproteins are amphipathic molecules that interact both with lipids of the lipoprotein particle core and the aqueous environment of the plasma. As such, APOE associates with chylomicrons, chylomicron remnants, very low density lipoproteins (VLDL) and intermediate density lipoproteins (IDL) but shows a preferential binding to high-density lipoproteins (HDL). It also binds a wide range of cellular receptors including the LDL receptor/LDLR, the LDL receptor-related proteins LRP1, LRP2 and LRP8 and the very low-density lipoprotein receptor/VLDLR that mediate the cellular uptake of the APOE-containing lipoprotein particles. Finally, APOE also has a heparin-binding activity and binds heparan-sulfate proteoglycans on the surface of cells, a property that supports the capture and the receptor-mediated uptake of APOE-containing lipoproteins by cells. A main function of APOE is to mediate lipoprotein clearance through the uptake of chylomicrons, VLDLs, and HDLs by hepatocytes. APOE is also involved in the biosynthesis by the liver of VLDLs as well as their uptake by peripheral tissues ensuring the delivery of triglycerides and energy storage in muscle, heart and adipose tissues. By participating in the lipoprotein-mediated distribution of lipids among tissues, APOE plays a critical role in plasma and tissues lipid homeostasis. APOE is also involved in two steps of reverse cholesterol transport, the HDLs-mediated transport of cholesterol from peripheral tissues to the liver, and thereby plays an important role in cholesterol homeostasis. First, it is functionally associated with ABCA1 in the biogenesis of HDLs in tissues. Second, it is enriched in circulating HDLs and mediates their uptake by hepatocytes. APOE also plays an important role in lipid transport in the central nervous system, regulating neuron survival and sprouting. The chain is Apolipoprotein E (APOE) from Hylobates lar (Lar gibbon).